The sequence spans 200 residues: Neutrophil gelatinase-associated lipocalin (200 aa).

An N-terminal signal peptide occupies residues 1–20 (MALSVMCLGLALLGVLQSQA). A Pyrrolidone carboxylic acid modification is found at Gln-21. Residue 72–74 (YST) participates in a carboxymycobactin binding. N-linked (GlcNAc...) asparagine glycosylation is found at Asn-81 and Asn-85. A disulfide bond links Cys-98 and Cys-197. Residue Tyr-128 coordinates enterobactin. Positions 147, 156, and 160 each coordinate a carboxymycobactin. Residue Lys-156 participates in enterobactin binding.

It belongs to the calycin superfamily. Lipocalin family. As to quaternary structure, monomer. Homodimer; disulfide-linked. Heterodimer; disulfide-linked with MMP9. Post-translationally, N-glycosylated. In terms of tissue distribution, expressed in the cortical tubules of the kidney (at protein level). Also expressed in the medullary tubules of the kidney. Detected in lung, spleen, uterus, vagina and epididymis.

Its subcellular location is the secreted. It is found in the cytoplasmic granule lumen. The protein localises to the cytoplasmic vesicle lumen. Functionally, iron-trafficking protein involved in multiple processes such as apoptosis, innate immunity and renal development. Binds iron through association with 2,3-dihydroxybenzoic acid (2,3-DHBA), a siderophore that shares structural similarities with bacterial enterobactin, and delivers or removes iron from the cell, depending on the context. Iron-bound form (holo-24p3) is internalized following binding to the SLC22A17 (24p3R) receptor, leading to release of iron and subsequent increase of intracellular iron concentration. In contrast, association of the iron-free form (apo-24p3) with the SLC22A17 (24p3R) receptor is followed by association with an intracellular siderophore, iron chelation and iron transfer to the extracellular medium, thereby reducing intracellular iron concentration. Involved in apoptosis due to interleukin-3 (IL3) deprivation: iron-loaded form increases intracellular iron concentration without promoting apoptosis, while iron-free form decreases intracellular iron levels, inducing expression of the proapoptotic protein BCL2L11/BIM, resulting in apoptosis. Involved in innate immunity; limits bacterial proliferation by sequestering iron bound to microbial siderophores, such as enterobactin. Can also bind siderophores from M.tuberculosis. This Mus musculus (Mouse) protein is Neutrophil gelatinase-associated lipocalin (Lcn2).